The chain runs to 167 residues: Secreted LysM effector Blys6 (167 aa).

The N-terminal stretch at 1 to 16 (MKGLCVAACTLVLAAA) is a signal peptide. Residues 109-162 (KWYRIRRGDDCGPVASEFGISADQLIEWNPWLSADVDGTHYPCMNIWPTDNLCV) enclose the LysM domain.

This sequence belongs to the secreted LysM effector family.

Might have a role in sequestration of chitin oligosaccharides (breakdown products of fungal cell walls that are released during invasion and act as triggers of host immunity) to dampen host defense. The polypeptide is Secreted LysM effector Blys6 (Beauveria bassiana (strain ARSEF 2860) (White muscardine disease fungus)).